Here is a 505-residue protein sequence, read N- to C-terminus: Deoxyguanosinetriphosphate triphosphohydrolase (505 aa).

One can recognise an HD domain in the interval 66 to 273 (RLTHSMEVQQ…MEAADDISYC (208 aa)).

The protein belongs to the dGTPase family. Type 1 subfamily. Homotetramer. Mg(2+) is required as a cofactor.

It carries out the reaction dGTP + H2O = 2'-deoxyguanosine + triphosphate + H(+). Its function is as follows. dGTPase preferentially hydrolyzes dGTP over the other canonical NTPs. The protein is Deoxyguanosinetriphosphate triphosphohydrolase of Serratia proteamaculans (strain 568).